Consider the following 90-residue polypeptide: U7-theraphotoxin-Hhn1a 4 (90 aa).

Positions 1–19 (MKTAIFTVVLALAVFAVLS) are cleaved as a signal peptide. A propeptide spanning residues 20-50 (FGWEANEEALSEEFTELIHEKEAASETEARE) is cleaved from the precursor. 3 disulfides stabilise this stretch: Cys51/Cys65, Cys58/Cys70, and Cys64/Cys81.

This sequence belongs to the neurotoxin 10 (Hwtx-1) family. 13 (Hntx-13) subfamily. In terms of tissue distribution, expressed by the venom gland.

It localises to the secreted. Functionally, ion channel inhibitor. This Cyriopagopus hainanus (Chinese bird spider) protein is U7-theraphotoxin-Hhn1a 4.